A 70-amino-acid polypeptide reads, in one-letter code: Conotoxin Im23.4 (70 aa).

A signal peptide spans 1 to 22 (MIMRMTLTLFVLVVMTAASASG). Positions 23–30 (DALTEAKR) are excised as a propeptide. Intrachain disulfides connect cysteine 34-cysteine 41, cysteine 45-cysteine 53, and cysteine 54-cysteine 69.

The protein belongs to the conotoxin K superfamily. In terms of tissue distribution, expressed by the venom duct.

The protein localises to the secreted. Probable neurotoxin. In Conus imperialis (Imperial cone), this protein is Conotoxin Im23.4.